A 202-amino-acid chain; its full sequence is Putative 3-methyladenine DNA glycosylase (202 aa).

It belongs to the DNA glycosylase MPG family.

The sequence is that of Putative 3-methyladenine DNA glycosylase from Clostridium botulinum (strain Alaska E43 / Type E3).